A 1363-amino-acid polypeptide reads, in one-letter code: Spike glycoprotein (1363 aa).

The N-terminal stretch at 1-13 (MFLILLISLPMAF) is a signal peptide. The Extracellular portion of the chain corresponds to 14-1307 (AVIGDLKCTT…GTYEYYVKWP (1294 aa)). One can recognise a BetaCoV S1-NTD domain in the interval 15 to 298 (VIGDLKCTTV…DFMSEIKCKT (284 aa)). 5 cysteine pairs are disulfide-bonded: Cys21–Cys165, Cys160–Cys193, Cys172–Cys252, Cys286–Cys296, and Cys331–Cys356. Residues Asn59 and Asn133 are each glycosylated (N-linked (GlcNAc...) asparagine; by host). Residue Asn198 is glycosylated (N-linked (GlcNAc...) asparagine; by host). One can recognise a BetaCoV S1-CTD domain in the interval 329–617 (PDCNIEAWLN…DVNSGTTCST (289 aa)). N-linked (GlcNAc...) asparagine; by host glycosylation is present at Asn359. 2 disulfide bridges follow: Cys374-Cys427 and Cys386-Cys615. Asn437, Asn649, Asn676, Asn696, Asn714, Asn739, and Asn788 each carry an N-linked (GlcNAc...) asparagine; by host glycan. Fusion peptide stretches follow at residues 914 to 935 (SAIEDLLFSKVKLSDVGFVEAY) and 933 to 953 (EAYNNCTGGAEIRDLICVQSY). The N-linked (GlcNAc...) asparagine; by host glycan is linked to Asn937. A disulfide bridge links Cys938 with Cys949. The heptad repeat 1 stretch occupies residues 1014 to 1064 (QKLIANAFNNALDAIQEGFDATNSALVKIQAVVNANAEALNNLLQQLSNRF). The stretch at 1043-1087 (QAVVNANAEALNNLLQQLSNRFGAISSSLQEILSRLDALEAQAQI) forms a coiled coil. N-linked (GlcNAc...) asparagine; by host glycans are attached at residues Asn1194, Asn1224, Asn1234, Asn1253, Asn1267, and Asn1288. Residues 1258–1296 (APDLSLDYINVTFLDLQDEMNRLQEAIKVLNQSYINLKD) form a heptad repeat 2 region. The stretch at 1269–1297 (TFLDLQDEMNRLQEAIKVLNQSYINLKDI) forms a coiled coil. Residues 1308–1328 (WYVWLLIGFAGVAMLVLLFFI) traverse the membrane as a helical segment. The Cytoplasmic segment spans residues 1329–1363 (CCCTGCGTSCFKICGGCCDDYTGHQELVIKTSHDD). Positions 1359 to 1363 (TSHDD) match the KxHxx motif.

Belongs to the betacoronaviruses spike protein family. In terms of assembly, homotrimer; each monomer consists of a S1 and a S2 subunit. The resulting peplomers protrude from the virus surface as spikes. In terms of processing, specific enzymatic cleavages in vivo yield mature proteins. The precursor is processed into S1 and S2 by host cell furin or another cellular protease to yield the mature S1 and S2 proteins. Additionally, a second cleavage leads to the release of a fusion peptide after viral attachment to host cell receptor. The cytoplasmic Cys-rich domain is palmitoylated. Spike glycoprotein is digested within host endosomes.

The protein localises to the virion membrane. Its subcellular location is the host endoplasmic reticulum-Golgi intermediate compartment membrane. It is found in the host cell membrane. Its function is as follows. Attaches the virion to the cell membrane by interacting with host receptor, initiating the infection. Functionally, mediates fusion of the virion and cellular membranes by acting as a class I viral fusion protein. Under the current model, the protein has at least three conformational states: pre-fusion native state, pre-hairpin intermediate state, and post-fusion hairpin state. During viral and target cell membrane fusion, the coiled coil regions (heptad repeats) assume a trimer-of-hairpins structure, positioning the fusion peptide in close proximity to the C-terminal region of the ectodomain. The formation of this structure appears to drive apposition and subsequent fusion of viral and target cell membranes. Acts as a viral fusion peptide which is unmasked following S2 cleavage occurring upon virus endocytosis. In Bos taurus (Bovine), this protein is Spike glycoprotein.